We begin with the raw amino-acid sequence, 433 residues long: Glutamate-1-semialdehyde 2,1-aminomutase (433 aa).

An N6-(pyridoxal phosphate)lysine modification is found at Lys-271.

Belongs to the class-III pyridoxal-phosphate-dependent aminotransferase family. HemL subfamily. As to quaternary structure, homodimer. Pyridoxal 5'-phosphate serves as cofactor.

It localises to the cytoplasm. It carries out the reaction (S)-4-amino-5-oxopentanoate = 5-aminolevulinate. It participates in porphyrin-containing compound metabolism; protoporphyrin-IX biosynthesis; 5-aminolevulinate from L-glutamyl-tRNA(Glu): step 2/2. The protein operates within porphyrin-containing compound metabolism; chlorophyll biosynthesis. The sequence is that of Glutamate-1-semialdehyde 2,1-aminomutase from Prochlorococcus marinus subsp. pastoris (strain CCMP1986 / NIES-2087 / MED4).